Here is a 747-residue protein sequence, read N- to C-terminus: Endoglucanase C (747 aa).

Positions 1–37 (MGHVTSPSKRYPASFKRAGSILGVSIALAAFSNVAAA) are cleaved as a signal peptide. Positions 38–136 (GCEYVVTNSW…TVNGAACTGG (99 aa)) constitute a CBM2 domain. 3 disulfides stabilise this stretch: cysteine 39/cysteine 133, cysteine 183/cysteine 214, and cysteine 193/cysteine 208. A CBM10 domain is found at 182–211 (QCNWYGTLYPLCVSTTSGWGYENNRSCISP). A disordered region spans residues 226–283 (GSSSPSSISSSSVRSSSSSSVVPPSSSSSSSVPSSSSSSVSSSSVVSSSSSSVSVPGT). Over residues 227-281 (SSSPSSISSSSVRSSSSSSVVPPSSSSSSSVPSSSSSSVSSSSVVSSSSSSVSVP) the composition is skewed to low complexity. The tract at residues 280–747 (VPGTGVFRVN…TQLLHNMWGL (468 aa)) is catalytic. Glutamate 502 functions as the Proton donor in the catalytic mechanism. The active-site Nucleophile is the glutamate 652.

Belongs to the glycosyl hydrolase 5 (cellulase A) family.

It carries out the reaction Endohydrolysis of (1-&gt;4)-beta-D-glucosidic linkages in cellulose, lichenin and cereal beta-D-glucans.. This Cellvibrio japonicus (strain Ueda107) (Pseudomonas fluorescens subsp. cellulosa) protein is Endoglucanase C (celC).